The chain runs to 699 residues: Elongation factor G (699 aa).

Residues 8–288 (EDYRNFGIMA…AVVDYLPSPM (281 aa)) form the tr-type G domain. GTP is bound by residues 17-24 (AHIDAGKT), 86-90 (DTPGH), and 140-143 (NKMD).

It belongs to the TRAFAC class translation factor GTPase superfamily. Classic translation factor GTPase family. EF-G/EF-2 subfamily.

It is found in the cytoplasm. In terms of biological role, catalyzes the GTP-dependent ribosomal translocation step during translation elongation. During this step, the ribosome changes from the pre-translocational (PRE) to the post-translocational (POST) state as the newly formed A-site-bound peptidyl-tRNA and P-site-bound deacylated tRNA move to the P and E sites, respectively. Catalyzes the coordinated movement of the two tRNA molecules, the mRNA and conformational changes in the ribosome. This Rhizobium leguminosarum bv. trifolii (strain WSM2304) protein is Elongation factor G.